We begin with the raw amino-acid sequence, 595 residues long: DNA mismatch repair protein MutL (595 aa).

Belongs to the DNA mismatch repair MutL/HexB family.

In terms of biological role, this protein is involved in the repair of mismatches in DNA. It is required for dam-dependent methyl-directed DNA mismatch repair. May act as a 'molecular matchmaker', a protein that promotes the formation of a stable complex between two or more DNA-binding proteins in an ATP-dependent manner without itself being part of a final effector complex. The chain is DNA mismatch repair protein MutL from Rhodopseudomonas palustris (strain TIE-1).